Reading from the N-terminus, the 513-residue chain is Glycogen synthase (513 aa).

Residue Lys-47 participates in ADP-alpha-D-glucose binding.

It belongs to the glycosyltransferase 1 family. Bacterial/plant glycogen synthase subfamily.

The catalysed reaction is [(1-&gt;4)-alpha-D-glucosyl](n) + ADP-alpha-D-glucose = [(1-&gt;4)-alpha-D-glucosyl](n+1) + ADP + H(+). Its pathway is glycan biosynthesis; glycogen biosynthesis. In terms of biological role, synthesizes alpha-1,4-glucan chains using ADP-glucose. In Pseudomonas paraeruginosa (strain DSM 24068 / PA7) (Pseudomonas aeruginosa (strain PA7)), this protein is Glycogen synthase.